The following is a 919-amino-acid chain: Coiled-coil domain-containing protein 66 (919 aa).

Disordered stretches follow at residues 145 to 166 (KEET…KDEN), 456 to 505 (ERDR…RERE), 724 to 744 (ERNN…LPSP), and 762 to 816 (LKSD…EPSH). Residues 150 to 161 (QDSLHLNNTSNQ) are compositionally biased toward polar residues. Positions 467-558 (HQKAITAQVE…EQRIRELAQK (92 aa)) form a coiled coil. A mediates localization to cilia, centrosomes and spindle microtubules and the interaction with PCM1, CEP290, CEP104 and CSPP1 region spans residues 570-919 (GGYGLDDVSG…NQEENFNSSF (350 aa)).

In terms of assembly, homodimer; disulfide-linked. Interacts with CEP290. Interacts with PCM1. Interacts with ARMC9, TOGARAM1, CSPP1 and CEP104. Interacts with CDK5RAP2, CEP152, CEP192, TBG1 and PRC1. Expressed in retina and blood. Expressed in retina, mainly in photoreceptors but also in outer plexiform and ganglion cell layers (at protein level).

The protein resides in the cytoplasm. The protein localises to the cytoskeleton. It is found in the microtubule organizing center. Its subcellular location is the centrosome. It localises to the centriolar satellite. The protein resides in the cell projection. The protein localises to the cilium. It is found in the cilium basal body. Its subcellular location is the cilium axoneme. It localises to the photoreceptor inner segment. The protein resides in the photoreceptor outer segment. Microtubule-binding protein required for ciliogenesis. May function in ciliogenesis by mediating the transport of proteins like BBS4 to the cilium, but also through the organization of the centriolar satellites. Required for the assembly of signaling-competent cilia with proper structure and length. Mediates this function in part by regulating transition zone assembly and basal body recruitment of the IFT-B complex. Cooperates with the ciliopathy proteins CSPP1 and CEP104 during cilium length regulation. Plays two important roles during cell division. First, is required for mitotic progression via regulation of spindle assembly, organization and orientation, levels of spindle microtubules (MTs), kinetochore-fiber integrity, and chromosome alignment. Second, functions during cytokinesis in part by regulating assembly and organization of central spindle and midbody MTs. Plays a role in retina morphogenesis and/or homeostasis. The chain is Coiled-coil domain-containing protein 66 (CCDC66) from Canis lupus familiaris (Dog).